Consider the following 460-residue polypeptide: UDP-N-acetylmuramoylalanine--D-glutamate ligase (460 aa).

123-129 (GTNGKTT) lines the ATP pocket.

Belongs to the MurCDEF family.

Its subcellular location is the cytoplasm. It catalyses the reaction UDP-N-acetyl-alpha-D-muramoyl-L-alanine + D-glutamate + ATP = UDP-N-acetyl-alpha-D-muramoyl-L-alanyl-D-glutamate + ADP + phosphate + H(+). It functions in the pathway cell wall biogenesis; peptidoglycan biosynthesis. Its function is as follows. Cell wall formation. Catalyzes the addition of glutamate to the nucleotide precursor UDP-N-acetylmuramoyl-L-alanine (UMA). In Enterococcus hirae, this protein is UDP-N-acetylmuramoylalanine--D-glutamate ligase (murD).